A 257-amino-acid polypeptide reads, in one-letter code: ATP synthase subunit a (257 aa).

A run of 6 helical transmembrane segments spans residues 34-54, 93-113, 122-142, 149-169, 187-207, and 210-230; these read ITNI…FSIL, YFPF…IGMV, HFIL…VLGF, FFSL…LVLI, ANIL…YNIM, and GIIF…FSGL.

It belongs to the ATPase A chain family. F-type ATPases have 2 components, CF(1) - the catalytic core - and CF(0) - the membrane proton channel. CF(1) has five subunits: alpha(3), beta(3), gamma(1), delta(1), epsilon(1). CF(0) has three main subunits: a, b and c.

It is found in the mitochondrion inner membrane. Functionally, mitochondrial membrane ATP synthase (F(1)F(0) ATP synthase or Complex V) produces ATP from ADP in the presence of a proton gradient across the membrane which is generated by electron transport complexes of the respiratory chain. F-type ATPases consist of two structural domains, F(1) - containing the extramembraneous catalytic core and F(0) - containing the membrane proton channel, linked together by a central stalk and a peripheral stalk. During catalysis, ATP synthesis in the catalytic domain of F(1) is coupled via a rotary mechanism of the central stalk subunits to proton translocation. Key component of the proton channel; it may play a direct role in the translocation of protons across the membrane. This is ATP synthase subunit a (ATP6) from Cochliobolus heterostrophus (Southern corn leaf blight fungus).